The chain runs to 96 residues: Aspartyl/glutamyl-tRNA(Asn/Gln) amidotransferase subunit C (96 aa).

It belongs to the GatC family. As to quaternary structure, heterotrimer of A, B and C subunits.

The catalysed reaction is L-glutamyl-tRNA(Gln) + L-glutamine + ATP + H2O = L-glutaminyl-tRNA(Gln) + L-glutamate + ADP + phosphate + H(+). It carries out the reaction L-aspartyl-tRNA(Asn) + L-glutamine + ATP + H2O = L-asparaginyl-tRNA(Asn) + L-glutamate + ADP + phosphate + 2 H(+). Functionally, allows the formation of correctly charged Asn-tRNA(Asn) or Gln-tRNA(Gln) through the transamidation of misacylated Asp-tRNA(Asn) or Glu-tRNA(Gln) in organisms which lack either or both of asparaginyl-tRNA or glutaminyl-tRNA synthetases. The reaction takes place in the presence of glutamine and ATP through an activated phospho-Asp-tRNA(Asn) or phospho-Glu-tRNA(Gln). The protein is Aspartyl/glutamyl-tRNA(Asn/Gln) amidotransferase subunit C of Chloroflexus aggregans (strain MD-66 / DSM 9485).